We begin with the raw amino-acid sequence, 186 residues long: Ribosome-recycling factor (186 aa).

Belongs to the RRF family.

The protein localises to the cytoplasm. Responsible for the release of ribosomes from messenger RNA at the termination of protein biosynthesis. May increase the efficiency of translation by recycling ribosomes from one round of translation to another. This Chlorobium luteolum (strain DSM 273 / BCRC 81028 / 2530) (Pelodictyon luteolum) protein is Ribosome-recycling factor.